A 345-amino-acid chain; its full sequence is 4-hydroxyproline 2-epimerase (345 aa).

Position 85 (Q85) interacts with substrate. Residue S93 is the Proton acceptor of the active site. Residues 94-95 (GS) and D251 contribute to the substrate site. C255 serves as the catalytic Proton donor. A substrate-binding site is contributed by 256–257 (GT).

This sequence belongs to the proline racemase family.

The enzyme catalyses trans-4-hydroxy-L-proline = cis-4-hydroxy-D-proline. Functionally, catalyzes the epimerization of trans-4-hydroxy-L-proline (t4LHyp) to cis-4-hydroxy-D-proline (c4DHyp). May be involved in a degradation pathway of t4LHyp. Can also catalyze the epimerization of trans-3-hydroxy-L-proline (t3LHyp) to cis-3-hydroxy-D-proline (c3DHyp) in vitro, albeit with 2-fold lower efficiency. Displays no proline racemase activity. This Rhizobium etli (strain ATCC 51251 / DSM 11541 / JCM 21823 / NBRC 15573 / CFN 42) protein is 4-hydroxyproline 2-epimerase.